The chain runs to 1029 residues: uncharacterized protein (1029 aa).

Residues 1 to 23 show a composition bias toward basic and acidic residues; it reads MREWCMLRESRTNTPRRAAERGK. The interval 1-31 is disordered; it reads MREWCMLRESRTNTPRRAAERGKRPGGSSVR. Residues 39–168 form the Guanylate cyclase domain; that stretch reads TALCYDLVGS…AALAMAARLQ (130 aa). Position 261-268 (261-268) interacts with ATP; the sequence is GDAGIGKS.

This is an uncharacterized protein from Rhizobium meliloti (strain 1021) (Ensifer meliloti).